A 522-amino-acid chain; its full sequence is MACELKEFLVKNDMYPMGDQVEKKRKAISKMTEYIQQWGKKIYIESAGVADDTDVKAATIYVYGSYRLNVYGNNSDIDACIVSNSTITRDDFYDGLYAELLNNPDVKELKQIPSKRSPHLSMIYLNIEFDLNFSRTAYTSLPDNLDILNENILKNMDELDTRAINGVRNTDIIDAFVPNHSEEAFRVMVRTIKLWTKKRGIYGYVYCFLNGISIEILVAQVISENYQLDNVRLLEKFFQVYSSWDWLRTPVMLGTNDDFNDKKKEGVIQILTPASPSENAAFSITKFSLEMIKRELKRGQEIVHEFSSEGVNDWAKLFKPRHLFCGYYIFIEFIVTSSSLEGLTTTIGKFESGLVNLMKGLSEIEEIIEANVIPNGFLDEENEKYFYYVGMNVKRDCPVDISTPLNSFLSIVNSGKDLIVDASIKKRSEIPTKFAHSVKRSITKSQEIKETSSQVPSSAITETFDIPTKPSIEQQLKAKEENSIPNEEKKEQLKKEMKQEANTIVKNSSTDDDFMKRFTRKN.

ATP is bound by residues 63–65 (YGS), 76–78 (DID), D130, K193, Y202, and 211–212 (GI). Residues D76, D78, and D130 each coordinate Mg(2+). The tract at residues 475 to 522 (QLKAKEENSIPNEEKKEQLKKEMKQEANTIVKNSSTDDDFMKRFTRKN) is disordered. A compositionally biased stretch (basic and acidic residues) spans 476 to 499 (LKAKEENSIPNEEKKEQLKKEMKQ).

The protein belongs to the poly(A) polymerase family. The cofactor is Mg(2+). Requires Mn(2+) as cofactor.

It localises to the cytoplasm. Its subcellular location is the nucleus. The catalysed reaction is RNA(n) + ATP = RNA(n)-3'-adenine ribonucleotide + diphosphate. Polymerase that creates the 3'-poly(A) tail of mRNA's. May acquire specificity through interaction with a cleavage and polyadenylation factor. The sequence is that of Poly(A) polymerase from Entamoeba histolytica (strain ATCC 30459 / HM-1:IMSS / ABRM).